Consider the following 471-residue polypeptide: ATP synthase subunit beta (471 aa).

152–159 serves as a coordination point for ATP; the sequence is GGAGVGKT.

This sequence belongs to the ATPase alpha/beta chains family. F-type ATPases have 2 components, CF(1) - the catalytic core - and CF(0) - the membrane proton channel. CF(1) has five subunits: alpha(3), beta(3), gamma(1), delta(1), epsilon(1). CF(0) has three main subunits: a(1), b(2) and c(9-12). The alpha and beta chains form an alternating ring which encloses part of the gamma chain. CF(1) is attached to CF(0) by a central stalk formed by the gamma and epsilon chains, while a peripheral stalk is formed by the delta and b chains.

It localises to the cell membrane. It carries out the reaction ATP + H2O + 4 H(+)(in) = ADP + phosphate + 5 H(+)(out). Its function is as follows. Produces ATP from ADP in the presence of a proton gradient across the membrane. The catalytic sites are hosted primarily by the beta subunits. The sequence is that of ATP synthase subunit beta from Herpetosiphon aurantiacus (strain ATCC 23779 / DSM 785 / 114-95).